The primary structure comprises 278 residues: 4-deoxy-L-threo-5-hexosulose-uronate ketol-isomerase (278 aa).

Positions 196, 198, 203, and 245 each coordinate Zn(2+).

Belongs to the KduI family. Zn(2+) serves as cofactor.

It carries out the reaction 5-dehydro-4-deoxy-D-glucuronate = 3-deoxy-D-glycero-2,5-hexodiulosonate. It participates in glycan metabolism; pectin degradation; 2-dehydro-3-deoxy-D-gluconate from pectin: step 4/5. Catalyzes the isomerization of 5-dehydro-4-deoxy-D-glucuronate to 3-deoxy-D-glycero-2,5-hexodiulosonate. This is 4-deoxy-L-threo-5-hexosulose-uronate ketol-isomerase from Salmonella agona (strain SL483).